Consider the following 252-residue polypeptide: MQIVVATHNEGKLVEIRRILEEDLGVDAENIELVSAGSLHLPDPVETGVTFQENALLKARAVAIRTGLPAVADDSGLIVDVMGNAPGILSARWAGAHGHDKANNALLLAQIGDIPDDKRTARFRCAAALVVPDTEAGADVTGGVAADGITVHTTAADGSTAPVHARYAIKSETVELGDMPGRIIREARGEHGFGYDPLFVPDDQPAGRVSTEPDHEGEPLTSAEMTSAEKNAISHRGKALKALVPAIEALLH.

7 to 12 contacts substrate; the sequence is THNEGK. Asp-74 functions as the Proton acceptor in the catalytic mechanism. Residue Asp-74 participates in Mg(2+) binding. Residues Ser-75 and 193–196 each bind substrate; that span reads FGYD. Positions 201 to 224 are disordered; that stretch reads PDDQPAGRVSTEPDHEGEPLTSAE. Residues Lys-230 and 235 to 236 contribute to the substrate site; that span reads HR.

It belongs to the HAM1 NTPase family. As to quaternary structure, homodimer. It depends on Mg(2+) as a cofactor.

The catalysed reaction is XTP + H2O = XMP + diphosphate + H(+). It catalyses the reaction dITP + H2O = dIMP + diphosphate + H(+). It carries out the reaction ITP + H2O = IMP + diphosphate + H(+). Functionally, pyrophosphatase that catalyzes the hydrolysis of nucleoside triphosphates to their monophosphate derivatives, with a high preference for the non-canonical purine nucleotides XTP (xanthosine triphosphate), dITP (deoxyinosine triphosphate) and ITP. Seems to function as a house-cleaning enzyme that removes non-canonical purine nucleotides from the nucleotide pool, thus preventing their incorporation into DNA/RNA and avoiding chromosomal lesions. The polypeptide is dITP/XTP pyrophosphatase (Bifidobacterium longum subsp. infantis (strain ATCC 15697 / DSM 20088 / JCM 1222 / NCTC 11817 / S12)).